The following is a 363-amino-acid chain: Protein-arginine kinase (363 aa).

One can recognise a Phosphagen kinase C-terminal domain in the interval 24–255 (IVLSSRIRLA…QQLIAQERAA (232 aa)). Residues 27–31 (SSRIR), His92, Arg126, 177–181 (RASVM), and 208–213 (RGTYGE) each bind ATP. The RDXXRA motif of the pArg binding pocket involved in allosteric regulation motif lies at 338–343 (RDVRRA).

It belongs to the ATP:guanido phosphotransferase family.

The enzyme catalyses L-arginyl-[protein] + ATP = N(omega)-phospho-L-arginyl-[protein] + ADP + H(+). Its activity is regulated as follows. Appears to be allosterically activated by the binding of pArg-containing polypeptides to the pArg-binding pocket localized in the C-terminal domain of McsB. Its function is as follows. Catalyzes the specific phosphorylation of arginine residues in a large number of proteins. Is part of the bacterial stress response system. Protein arginine phosphorylation has a physiologically important role and is involved in the regulation of many critical cellular processes, such as protein homeostasis, motility, competence, and stringent and stress responses, by regulating gene expression and protein activity. The sequence is that of Protein-arginine kinase from Geobacillus thermodenitrificans (strain NG80-2).